Consider the following 333-residue polypeptide: Endo-1,4-beta-xylanase (333 aa).

Residues 1 to 17 (MYLVAFMLLAILPTGYC) form the signal peptide. One can recognise a GH10 domain in the interval 18-330 (QLNTLAVRAG…KPAYQGIVDG (313 aa)). The active-site Proton donor is E147. The active-site Nucleophile is the E252.

This sequence belongs to the glycosyl hydrolase 10 (cellulase F) family.

It localises to the secreted. It catalyses the reaction Endohydrolysis of (1-&gt;4)-beta-D-xylosidic linkages in xylans.. The protein operates within glycan degradation; xylan degradation. Has xylanase activity. Seems to be involved in the release of sugars from the hemicellulolytic fraction in the compost. The chain is Endo-1,4-beta-xylanase (xlnA) from Agaricus bisporus (White button mushroom).